The chain runs to 154 residues: Ribosome maturation factor RimP (154 aa).

The protein belongs to the RimP family.

The protein localises to the cytoplasm. Required for maturation of 30S ribosomal subunits. In Clostridium perfringens (strain SM101 / Type A), this protein is Ribosome maturation factor RimP.